Reading from the N-terminus, the 28-residue chain is Omega-conotoxin-like CnVIIH (28 aa).

3 disulfides stabilise this stretch: Cys-1–Cys-16, Cys-8–Cys-20, and Cys-15–Cys-27. The residue at position 7 (Pro-7) is a 4-hydroxyproline; partial. Met-12 carries the post-translational modification Methionine sulfoxide. Cysteine amide is present on Cys-27.

Belongs to the conotoxin O1 superfamily. Expressed by the venom duct.

It is found in the secreted. In terms of biological role, omega-conotoxins act at presynaptic membranes, they bind and block voltage-gated calcium channels (Cav). This toxin blocks N-type calcium channels (Cav2.2/CACNA1B) with high potency. Unexpectedly, it does not show any blocking activity at amphibian neuromuscular junction. In vivo, when intracerebroventricularly injected into mice causes shaking activity, and, at higher doses, causes mild tremors. When injected intramuscularly into fish, it causes paralysis, and, at higher doses, causes death. This Conus consors (Singed cone) protein is Omega-conotoxin-like CnVIIH.